Here is an 886-residue protein sequence, read N- to C-terminus: Valine--tRNA ligase (886 aa).

The 'HIGH' region signature appears at 43-53 (PYPTGRMHLGH). The short motif at 528–532 (KMSKS) is the 'KMSKS' region element. Residue K531 coordinates ATP.

The protein belongs to the class-I aminoacyl-tRNA synthetase family. ValS type 2 subfamily.

The protein resides in the cytoplasm. It carries out the reaction tRNA(Val) + L-valine + ATP = L-valyl-tRNA(Val) + AMP + diphosphate. Catalyzes the attachment of valine to tRNA(Val). As ValRS can inadvertently accommodate and process structurally similar amino acids such as threonine, to avoid such errors, it has a 'posttransfer' editing activity that hydrolyzes mischarged Thr-tRNA(Val) in a tRNA-dependent manner. The sequence is that of Valine--tRNA ligase from Methanococcus maripaludis (strain DSM 14266 / JCM 13030 / NBRC 101832 / S2 / LL).